A 257-amino-acid chain; its full sequence is Imidazole glycerol phosphate synthase subunit HisF (257 aa).

Catalysis depends on residues Asp-11 and Asp-130.

The protein belongs to the HisA/HisF family. In terms of assembly, heterodimer of HisH and HisF.

Its subcellular location is the cytoplasm. It carries out the reaction 5-[(5-phospho-1-deoxy-D-ribulos-1-ylimino)methylamino]-1-(5-phospho-beta-D-ribosyl)imidazole-4-carboxamide + L-glutamine = D-erythro-1-(imidazol-4-yl)glycerol 3-phosphate + 5-amino-1-(5-phospho-beta-D-ribosyl)imidazole-4-carboxamide + L-glutamate + H(+). Its pathway is amino-acid biosynthesis; L-histidine biosynthesis; L-histidine from 5-phospho-alpha-D-ribose 1-diphosphate: step 5/9. In terms of biological role, IGPS catalyzes the conversion of PRFAR and glutamine to IGP, AICAR and glutamate. The HisF subunit catalyzes the cyclization activity that produces IGP and AICAR from PRFAR using the ammonia provided by the HisH subunit. The sequence is that of Imidazole glycerol phosphate synthase subunit HisF from Shewanella halifaxensis (strain HAW-EB4).